The sequence spans 79 residues: Small ribosomal subunit protein bS16 (79 aa).

The protein belongs to the bacterial ribosomal protein bS16 family.

This chain is Small ribosomal subunit protein bS16, found in Desulfovibrio desulfuricans (strain ATCC 27774 / DSM 6949 / MB).